Reading from the N-terminus, the 944-residue chain is 2-oxoglutarate dehydrogenase E1 component (944 aa).

Positions 918-944 are disordered; the sequence is SSTAEGDPTVHKKEQERIVSDSLTRKN. Positions 925-936 are enriched in basic and acidic residues; that stretch reads PTVHKKEQERIV.

The protein belongs to the alpha-ketoglutarate dehydrogenase family. As to quaternary structure, homodimer. Part of the 2-oxoglutarate dehydrogenase (OGDH) complex composed of E1 (2-oxoglutarate dehydrogenase), E2 (dihydrolipoamide succinyltransferase) and E3 (dihydrolipoamide dehydrogenase); the complex contains multiple copies of the three enzymatic components (E1, E2 and E3). The cofactor is thiamine diphosphate.

The catalysed reaction is N(6)-[(R)-lipoyl]-L-lysyl-[protein] + 2-oxoglutarate + H(+) = N(6)-[(R)-S(8)-succinyldihydrolipoyl]-L-lysyl-[protein] + CO2. In terms of biological role, E1 component of the 2-oxoglutarate dehydrogenase (OGDH) complex which catalyzes the decarboxylation of 2-oxoglutarate, the first step in the conversion of 2-oxoglutarate to succinyl-CoA and CO(2). This is 2-oxoglutarate dehydrogenase E1 component from Bacillus pumilus (strain SAFR-032).